Reading from the N-terminus, the 200-residue chain is MDYKQSNLFLFPIGLGSTYIFYKKICGTFCSIDNDLEVNPYLTHGILMLTLVYFLSDYYLMIVKYNPKHNVYFVHHFIGIVSIYFSYMKYYYLIKYLFAYLTFELSTPFLNIAIKYRNQGVYNKCSIFSELAFFILFTVVRIIFGTYLWFVTSNTLSSIEYPYNYLIVLPTILQFLNYWWYYRILKILRAKLFGCINKED.

In terms of domain architecture, TLC spans 1–193 (MDYKQSNLFL…ILKILRAKLF (193 aa)). Helical transmembrane passes span 9-29 (FLFP…CGTF), 43-63 (THGI…LMIV), 74-94 (VHHF…YYLI), 96-116 (YLFA…AIKY), 131-151 (LAFF…LWFV), and 165-185 (YLIV…YRIL).

The protein localises to the membrane. This Acanthamoeba polyphaga mimivirus (APMV) protein is Putative TLC domain-containing protein L438.